We begin with the raw amino-acid sequence, 450 residues long: Chromosomal replication initiator protein DnaA (450 aa).

Residues 1–73 are domain I, interacts with DnaA modulators; the sequence is MNTKELWIEV…KNILKKLTGI (73 aa). The tract at residues 73 to 104 is domain II; the sequence is IQYNISFELEKNINKQASVISKIDTLTENNNL. The domain III, AAA+ region stretch occupies residues 105–326; that stretch reads AYYENYTFEN…GAIKRLLFLA (222 aa). Gly-149, Gly-151, Lys-152, and Thr-153 together coordinate ATP. Residues 327 to 450 form a domain IV, binds dsDNA region; that stretch reads VMNKKPNEII…NAIRRKIEGR (124 aa).

The protein belongs to the DnaA family. In terms of assembly, oligomerizes as a right-handed, spiral filament on DNA at oriC.

Its subcellular location is the cytoplasm. In terms of biological role, plays an essential role in the initiation and regulation of chromosomal replication. ATP-DnaA binds to the origin of replication (oriC) to initiate formation of the DNA replication initiation complex once per cell cycle. Binds the DnaA box (a 9 base pair repeat at the origin) and separates the double-stranded (ds)DNA. Forms a right-handed helical filament on oriC DNA; dsDNA binds to the exterior of the filament while single-stranded (ss)DNA is stabiized in the filament's interior. The ATP-DnaA-oriC complex binds and stabilizes one strand of the AT-rich DNA unwinding element (DUE), permitting loading of DNA polymerase. After initiation quickly degrades to an ADP-DnaA complex that is not apt for DNA replication. Binds acidic phospholipids. This is Chromosomal replication initiator protein DnaA from Spiroplasma citri.